The sequence spans 375 residues: Alcohol dehydrogenase 1 (375 aa).

An N-acetylserine modification is found at serine 2. Residues cysteine 47, histidine 68, cysteine 98, cysteine 101, cysteine 104, cysteine 112, and cysteine 175 each coordinate Zn(2+). NAD(+) contacts are provided by residues 200 to 205 (WSGRVG), aspartate 224, and lysine 229. The residue at position 234 (lysine 234) is an N6-succinyllysine. 293-295 (VGV) contacts NAD(+). Residue lysine 340 is modified to N6-succinyllysine. Position 370 (arginine 370) interacts with NAD(+).

The protein belongs to the zinc-containing alcohol dehydrogenase family. Class-I subfamily. As to quaternary structure, homodimer. The cofactor is Zn(2+).

The protein resides in the cytoplasm. It catalyses the reaction a primary alcohol + NAD(+) = an aldehyde + NADH + H(+). The catalysed reaction is a secondary alcohol + NAD(+) = a ketone + NADH + H(+). The protein is Alcohol dehydrogenase 1 (ADH1) of Geomys bursarius (Plains pocket gopher).